Consider the following 299-residue polypeptide: tRNA dimethylallyltransferase (299 aa).

Position 10 to 17 (10 to 17 (GPTAVGKT)) interacts with ATP. Residue 12-17 (TAVGKT) coordinates substrate. Residues 35 to 38 (DSQQ) form an interaction with substrate tRNA region.

The protein belongs to the IPP transferase family. In terms of assembly, monomer. Mg(2+) serves as cofactor.

It catalyses the reaction adenosine(37) in tRNA + dimethylallyl diphosphate = N(6)-dimethylallyladenosine(37) in tRNA + diphosphate. Its function is as follows. Catalyzes the transfer of a dimethylallyl group onto the adenine at position 37 in tRNAs that read codons beginning with uridine, leading to the formation of N6-(dimethylallyl)adenosine (i(6)A). In Streptococcus thermophilus (strain CNRZ 1066), this protein is tRNA dimethylallyltransferase.